Reading from the N-terminus, the 395-residue chain is Protein SGT1 (395 aa).

Lys32 is covalently cross-linked (Glycyl lysine isopeptide (Lys-Gly) (interchain with G-Cter in ubiquitin)). The interval 137–175 (KKNKKQKDSTNKHTIKPVESIENRGDNNSSHSPISPLKI) is disordered. Residues Ser168 and Ser171 each carry the phosphoserine modification. The 96-residue stretch at 182-277 (SPKFKIDWYQ…IDSTQWKKLE (96 aa)) folds into the CS domain. The 84-residue stretch at 312-395 (SYPSSSKKKI…PPEGMEPKHW (84 aa)) folds into the SGS domain. A disordered region spans residues 373–395 (DWEDVSKGTVKTSPPEGMEPKHW).

This sequence belongs to the SGT1 family. In terms of assembly, interacts with SKP1/CBF3D. Part of SCF E3 ubiquitin ligase complexes containing SKP1, CDC53, HRT1 and some F-box proteins. Interacts with CIR1/CDC35.

In terms of biological role, involved in ubiquitination and subsequent proteasomal degradation of target proteins. Required for both entry into S phase and kinetochore function. Also involved in cyclic AMP (cAMP) pathway, possibly by participating in the assembly or the conformational activation of specific multiprotein complexes. The protein is Protein SGT1 of Saccharomyces cerevisiae (strain ATCC 204508 / S288c) (Baker's yeast).